Here is an 832-residue protein sequence, read N- to C-terminus: Mechanosensitive cation channel TMEM63B (832 aa).

The Extracellular portion of the chain corresponds to 1–40 (MLPFLLATLGTTALNNSNPKDYCYSARIRSTVLQGLPFGG). A helical membrane pass occupies residues 41–65 (VPTVLALDFMCFLALLFLFSILRKV). Cysteine 51 carries the S-palmitoyl cysteine lipid modification. At 66–145 (AWDYGRLALV…KDDEIRDKCG (80 aa)) the chain is on the cytoplasmic side. A Mediates endoplasmic reticulum retention motif is present at residues 86-88 (RDR). 4 positions are modified to phosphoserine: serine 111, serine 113, serine 114, and serine 115. A lipid anchor (S-palmitoyl cysteine) is attached at cysteine 126. The chain crosses the membrane as a helical span at residues 146-178 (GDAVHYLSFQRHIIGLLVVVGVLSVGIVLPVNF). At 179-202 (SGDLLENNAYSFGRTTIANLKSGN) the chain is on the extracellular side. A helical membrane pass occupies residues 203–227 (NLLWLHTSFAFLYLLLTVYSMRRHT). Residues 228–427 (SKMRYKEDDL…IYWEHLSIRG (200 aa)) are Cytoplasmic-facing. Residues 231 to 426 (RYKEDDLVKR…NIYWEHLSIR (196 aa)) form an intracellular linker IL2; confers mechanosensitivity region. 2 S-palmitoyl cysteine lipidation sites follow: cysteine 382 and cysteine 398. A helical membrane pass occupies residues 428 to 457 (FIWWLRCLVINVVLFILLFFLTTPAIIITT). The Extracellular portion of the chain corresponds to 458 to 472 (MDKFNVTKPVEYLNN). N-linked (GlcNAc...) asparagine glycosylation occurs at asparagine 462. The helical transmembrane segment at 473 to 502 (PIITQFFPTLLLWCFSALLPTIVYYSAFFE) threads the bilayer. The Cytoplasmic portion of the chain corresponds to 503–506 (AHWT). The helical transmembrane segment at 507–543 (RSGENRTTMHKCYTFLIFMVLLLPSLGLSSLDLFFRW) threads the bilayer. At 544–566 (LFDKKFLAEAAIRFECVFLPDNG) the chain is on the extracellular side. Residues 567-599 (AFFVNYVIASAFIGNAMDLLRIPGLLMYMIRLC) traverse the membrane as a helical segment. Residues 567–599 (AFFVNYVIASAFIGNAMDLLRIPGLLMYMIRLC) are gating helix. At 600–619 (LARSAAERRNVKRHQAYEFQ) the chain is on the cytoplasmic side. Residues 620-638 (FGAAYAWMMCVFTVVMTYS) form a helical membrane-spanning segment. Over 639–641 (ITC) the chain is Extracellular. The helical transmembrane segment at 642 to 666 (PIIVPFGLMYMLLKHLVDRYNLYYA) threads the bilayer. The Cytoplasmic segment spans residues 667-673 (YLPAKLD). The helical transmembrane segment at 674-702 (KKIHSGAVNQVVAAPILCLFWLLFFSTMR) threads the bilayer. Over 703-707 (TGFLA) the chain is Extracellular. The chain crosses the membrane as a helical span at residues 708-728 (PTSMFTFVVLVITIVICLCHV). S-palmitoyl cysteine attachment occurs at residues cysteine 726 and cysteine 729. The Cytoplasmic segment spans residues 729–832 (CFGHFKYLSA…DSLIENEIHQ (104 aa)). The tract at residues 780–814 (EVDGDGDGAPGSSGDEPPSSSSQDEELLMPPDALT) is disordered. The segment covering 789–801 (PGSSGDEPPSSSS) has biased composition (low complexity).

This sequence belongs to the CSC1 (TC 1.A.17) family. As to quaternary structure, monomer. Interacts with SLC19A2; interaction is required for the phospholipid scramblase activity. Post-translationally, palmitoylation is required for localization to the plasma membrane and stability. N-Glycosylated.

The protein resides in the cell membrane. The protein localises to the endoplasmic reticulum membrane. Its subcellular location is the lysosome membrane. It localises to the early endosome membrane. It carries out the reaction Ca(2+)(in) = Ca(2+)(out). It catalyses the reaction Mg(2+)(in) = Mg(2+)(out). The catalysed reaction is K(+)(in) = K(+)(out). The enzyme catalyses Na(+)(in) = Na(+)(out). It carries out the reaction Cs(+)(in) = Cs(+)(out). It catalyses the reaction a 1,2-diacyl-sn-glycero-3-phosphocholine(in) = a 1,2-diacyl-sn-glycero-3-phosphocholine(out). The catalysed reaction is a sphingomyelin(in) = a sphingomyelin(out). Its function is as follows. Mechanosensitive cation channel with low conductance and high activation threshold. Osmosensitive cation channel preferentially activated by hypotonic stress. Also acts as a phospholipid scramblase in response to changes in membrane structure: upon changes in membrane curvature and thickness, alters its conformation and translocates phospholipids, such as phosphatidylcholine and sphingomyelin, thereby controlling plasma membrane lipid distribution. Forms a heterodimer with SLC19A2, which mediates phospholipid scramblase activity following Ca(2+) stimulation. Expressed in excitatory neurons of the subfornical organ and functions as a thirst receptor that mediates neuronal response to hyperosmolality to drive thirst and drinking behavior. Facilitates intestinal motility by promoting proliferation of intestinal stem cells. Essential for the baby's first breath and respiration throughout life. Upon lung inflation conducts cation currents in alveolar type 1 and 2 cells triggering lamellar body exocytosis and surfactant secretion into airspace. Acts as an osmosensor in cochlear outer hair cells (OHCs) where it mediates calcium influx and regulatory volume decrease response. Required for the maintenance of OHC morphology, OHC survival and normal hearing. This chain is Mechanosensitive cation channel TMEM63B, found in Homo sapiens (Human).